The sequence spans 121 residues: MEDIMQLPKARVNASMLPQYIDRPVCFVGKLEKIHPTGKMFILSDGEGKNGTIELMEPLDEEISGIVEVVGKVTAKATVLCASYTLFKEDTNRFDLELYNEAVKIINELPQFFPVGLPQHE.

Residues Lys-39 and Lys-88 each participate in a glycyl lysine isopeptide (Lys-Gly) (interchain with G-Cter in ubiquitin) cross-link.

This sequence belongs to the replication factor A protein 3 family. Component of the canonical replication protein A complex (RPA), a heterotrimer composed of RPA1, RPA2 and RPA3. Also a component of the aRPA, the alternative replication protein A complex, a trimeric complex similar to the replication protein A complex/RPA but where RPA1 and RPA3 are associated with RPA4 instead of RPA2. Post-translationally, ubiquitinated by RFWD3 at stalled replication forks in response to DNA damage: ubiquitination by RFWD3 does not lead to degradation by the proteasome and promotes removal of the RPA complex from stalled replication forks, promoting homologous recombination.

The protein resides in the nucleus. Functionally, as part of the heterotrimeric replication protein A complex (RPA/RP-A), binds and stabilizes single-stranded DNA intermediates, that form during DNA replication or upon DNA stress. It prevents their reannealing and in parallel, recruits and activates different proteins and complexes involved in DNA metabolism. Thereby, it plays an essential role both in DNA replication and the cellular response to DNA damage. In the cellular response to DNA damage, the RPA complex controls DNA repair and DNA damage checkpoint activation. Through recruitment of ATRIP activates the ATR kinase a master regulator of the DNA damage response. It is required for the recruitment of the DNA double-strand break repair factors RAD51 and RAD52 to chromatin, in response to DNA damage. Also recruits to sites of DNA damage proteins like XPA and XPG that are involved in nucleotide excision repair and is required for this mechanism of DNA repair. Also plays a role in base excision repair (BER), probably through interaction with UNG. Also recruits SMARCAL1/HARP, which is involved in replication fork restart, to sites of DNA damage. May also play a role in telomere maintenance. RPA3 has its own single-stranded DNA-binding activity and may be responsible for polarity of the binding of the complex to DNA. In Mus musculus (Mouse), this protein is Replication protein A 14 kDa subunit (Rpa3).